The sequence spans 322 residues: tRNA-specific adenosine deaminase subunit TAD3 (322 aa).

Residues 162-283 (EVRNELSRAS…EMQRTGSLKL (122 aa)) form the CMP/dCMP-type deaminase domain. 4 residues coordinate Zn(2+): His216, Cys254, Cys257, and Cys322.

This sequence belongs to the cytidine and deoxycytidylate deaminase family. ADAT3 subfamily. Heterodimer with TAD2.

The protein localises to the cytoplasm. It is found in the nucleus. Its subcellular location is the peroxisome. Functionally, structural subunit of tRNA-specific adenosine deaminase, which deaminates adenosine-34 (the first, also called wobble position of the anticodon) to inosine in many tRNAs. Inosine-34 allows the decoding of 3 different nucleotides at the third position of mRNA codons, as inosine is able to pair with U, C, and A. The polypeptide is tRNA-specific adenosine deaminase subunit TAD3 (TAD3) (Saccharomyces cerevisiae (strain ATCC 204508 / S288c) (Baker's yeast)).